An 804-amino-acid chain; its full sequence is Enhancer of polycomb homolog 2 (804 aa).

Disordered stretches follow at residues 372-398 (QSSD…PDGS), 484-507 (GFSS…SDRH), 602-623 (QQSQ…KSDC), and 642-669 (NSPT…VQPS). Over residues 602 to 611 (QQSQQSLQQS) the composition is skewed to low complexity. The span at 654–669 (DQNAGHSNLNGVVQPS) shows a compositional bias: polar residues.

It belongs to the enhancer of polycomb family.

It is found in the nucleus. May play a role in transcription or DNA repair. The sequence is that of Enhancer of polycomb homolog 2 (epc2) from Xenopus tropicalis (Western clawed frog).